Here is a 365-residue protein sequence, read N- to C-terminus: Nicotinate N-methyltransferase 1 (365 aa).

Residue Asp232 coordinates S-adenosyl-L-methionine.

The protein belongs to the class I-like SAM-binding methyltransferase superfamily. Cation-independent O-methyltransferase family.

It carries out the reaction nicotinate + S-adenosyl-L-methionine = N-methylnicotinate + S-adenosyl-L-homocysteine. Involved in nicotinate detoxification in planta. Catalyzes the conversion of nicotinate to N-methylnicotinate, which is a detoxified form of endogenous nicotinate in planta. The chain is Nicotinate N-methyltransferase 1 from Oryza sativa subsp. japonica (Rice).